The following is a 1133-amino-acid chain: Early transcription factor large subunit homolog (1133 aa).

Positions 52 to 352 (KGGRAFFPCD…PNGQPLQRQQ (301 aa)) constitute a Helicase ATP-binding domain. 99–106 (WQTGTGKS) serves as a coordination point for ATP. The DEAH box motif lies at 281–284 (DEIH). Positions 524 to 724 (MMKDILSIIR…EGDKALRKHA (201 aa)) constitute a Helicase C-terminal domain.

Belongs to the DEAD box helicase family. DEAH subfamily.

Its subcellular location is the virion. The enzyme catalyses ATP + H2O = ADP + phosphate + H(+). Putative initation factor. The sequence is that of Early transcription factor large subunit homolog from Ornithodoros (relapsing fever ticks).